The following is a 68-amino-acid chain: UPF0434 protein BURPS668_0926 (68 aa).

This sequence belongs to the UPF0434 family.

This Burkholderia pseudomallei (strain 668) protein is UPF0434 protein BURPS668_0926.